The primary structure comprises 338 residues: Large ribosomal subunit protein uL10 (338 aa).

A disordered region spans residues 295–338 (EVPTIQPTTPPEKKEEEEKKEEEEEEAETVSEEELAEGLGALFG). The segment covering 312 to 330 (EKKEEEEEEAETVSEEELA) has biased composition (acidic residues).

The protein belongs to the universal ribosomal protein uL10 family. As to quaternary structure, part of the 50S ribosomal subunit. Forms part of the ribosomal stalk which helps the ribosome interact with GTP-bound translation factors. Forms a heptameric L10(L12)2(L12)2(L12)2 complex, where L10 forms an elongated spine to which the L12 dimers bind in a sequential fashion.

Its function is as follows. Forms part of the ribosomal stalk, playing a central role in the interaction of the ribosome with GTP-bound translation factors. In Staphylothermus marinus (strain ATCC 43588 / DSM 3639 / JCM 9404 / F1), this protein is Large ribosomal subunit protein uL10.